Consider the following 111-residue polypeptide: uncharacterized protein (111 aa).

The next 3 helical transmembrane spans lie at 4–22 (FWIL…QFFI), 49–71 (LLIL…LFFI), and 91–108 (YMYH…LIYV).

Its subcellular location is the cell membrane. This is an uncharacterized protein from Bacillus subtilis (strain 168).